A 312-amino-acid chain; its full sequence is Pantothenate kinase (312 aa).

97–104 lines the ATP pocket; the sequence is GSVAVGKS.

Belongs to the prokaryotic pantothenate kinase family.

It is found in the cytoplasm. The enzyme catalyses (R)-pantothenate + ATP = (R)-4'-phosphopantothenate + ADP + H(+). The protein operates within cofactor biosynthesis; coenzyme A biosynthesis; CoA from (R)-pantothenate: step 1/5. The sequence is that of Pantothenate kinase from Mycobacterium sp. (strain JLS).